The chain runs to 182 residues: Mesencephalic astrocyte-derived neurotrophic factor (182 aa).

Residues 1-24 (MRRMWATQGLAVALALSVLPGSRA) form the signal peptide. Disulfide bonds link cysteine 30–cysteine 117, cysteine 33–cysteine 106, cysteine 64–cysteine 75, and cysteine 151–cysteine 154. A Phosphotyrosine modification is found at tyrosine 76. Positions 96-158 (LAHHIPVEKI…ETCKGCAEKS (63 aa)) are interacts with ERN1, EIF2AK3 and ATF6. An interacts with HSPA5 region spans residues 129 to 172 (TVDLKKLRVKELKKILDDWGETCKGCAEKSDYIRKINELMPKYA).

This sequence belongs to the ARMET family. Interacts directly (via SAP domain) with HSPA5/BiP; the interaction inhibits ATP binding to HSPA5/BiP and subsequent nucleotide exchange. Component of a complex containing at least CRELD2, MANF, MATN3 and PDIA4. Interacts (via C-terminus) with ERN1 (via luminal domain); the interaction is decreased in the presence of increasing concentrations of Ca(2+). In terms of processing, may contain sialic acid residues.

It is found in the secreted. The protein localises to the endoplasmic reticulum lumen. It localises to the sarcoplasmic reticulum lumen. Its function is as follows. Selectively promotes the survival of dopaminergic neurons of the ventral mid-brain. Modulates GABAergic transmission to the dopaminergic neurons of the substantia nigra. Enhances spontaneous, as well as evoked, GABAergic inhibitory postsynaptic currents in dopaminergic neurons. Inhibits cell proliferation and endoplasmic reticulum (ER) stress-induced cell death. Retained in the ER/sarcoplasmic reticulum (SR) through association with the endoplasmic reticulum chaperone protein HSPA5 under normal conditions. Stabilizes HSPA5/BiP in its substrate-bound ADP state, which facilitates HSPA5/BiP incorporation into chaperone-client complexes during endoplasmic reticulum stress, its interaction with HSPA5/BiP inhibits ATP binding to HSPA5/BiP and subsequent nucleotide exchange. As a result acts as a repressor of the unfolded protein response (UPR) pathway. Up-regulated and secreted by the ER/SR in response to ER stress and hypoxia. Following secretion by the ER/SR, directly binds to 3-O-sulfogalactosylceramide, a lipid sulfatide in the outer cell membrane of target cells. Sulfatide binding promotes its cellular uptake by endocytosis, and is required for its role in alleviating ER stress and cell toxicity under hypoxic and ER stress conditions. Essential for embryonic lung development. Required for the correct postnatal temporal and structural development of splenic white pulp. Required for the repair-associated myeloid response in skeletal muscle, acts as a regulator of phenotypic transition towards prorepair macrophages in response to muscle injury and as a result limits excessive proinflammatory signaling. Represses RELA expression and therefore NF-kB signaling in the myocardium, as a result limits macrophage infiltration of injured tissue and M1 macrophage differentiation in response to myocardial injury. Required for endochondral ossification in long bones and the skull during postnatal development. This Homo sapiens (Human) protein is Mesencephalic astrocyte-derived neurotrophic factor.